We begin with the raw amino-acid sequence, 163 residues long: Adenosine 5'-monophosphoramidase HINT2 (163 aa).

The N-terminal 17 residues, methionine 1–alanine 17, are a transit peptide targeting the mitochondrion. An HIT domain is found at isoleucine 55–glycine 163. AMP is bound by residues serine 63 and aspartate 80. Lysine 119 carries the post-translational modification N6-acetyllysine. Asparagine 136 provides a ligand contact to AMP. Lysine 139 is subject to N6-acetyllysine. Residues alanine 142–valine 145 and histidine 149–histidine 151 contribute to the AMP site. Positions histidine 147–histidine 151 match the Histidine triad motif motif. Histidine 149 functions as the Tele-AMP-histidine intermediate in the catalytic mechanism.

Belongs to the HINT family.

The protein localises to the mitochondrion. The catalysed reaction is adenosine 5'-phosphoramidate + H2O = AMP + NH4(+). Its function is as follows. Exhibits adenosine 5'-monophosphoramidase activity, hydrolyzing purine nucleotide phosphoramidates with a single phosphate group such as adenosine 5'monophosphoramidate (AMP-NH2) to yield AMP and NH2. Hydrolyzes adenosine 5'-O-p-nitrophenylphosphoramidate (AMP-pNA). May be involved in steroid biosynthesis. May play a role in apoptosis. The sequence is that of Adenosine 5'-monophosphoramidase HINT2 from Bos taurus (Bovine).